We begin with the raw amino-acid sequence, 553 residues long: MFCIQCEQTIQTPAVKGCSFAQGMCGKTAEVSDLQDVLVYSLQGVSYWATQAHRYGIINDEINQWAPKAFFSTLTNVNFDPERILQLTSQAAQFKAQLKDQVLTASSLANSPLSEVPAVAEFELPENAQAILAFAPQVAVNRGKESVHEDVIGLRLLCLYGLKGAAAYMEHARVLEQTSNDIYAEYHEIMAWLGTDPEDLGELLDCSMRIGLMNYKVMEMLDHGETATFGHPVPTAVNVKPVKGKCILVSGHDLHDLEKILQQTEGKGINVYTNGEMLPAHGYPELNKYPHLVGNYGSAWQNQQKEFANFPGAIVMTSNCLLNPNVGQYADRLFTRSIVGWPGVAHIEGDDFSAVIESALAQPGFQHDEIEHMITVGFGRNALMNAAPAVIDQVKQGNIKHFFLVGGCDGDKAERSYYTDFTEAAPEDTLILTLACGKFRFNKNTFGDINGIPRLLDVGQCNDAYSAIQLALALAQEFDCGINELPLTLVLSWFEQKAIVILLTLFALGVKGIYTGPTAPAFLTPNLIAIIQEKFDMRSIGNVQDDLNTILAA.

4 residues coordinate [2Fe-2S] cluster: Cys-3, Cys-6, Cys-18, and Cys-25. 8 residues coordinate hybrid [4Fe-2O-2S] cluster: His-252, Glu-276, Cys-320, Cys-408, Cys-436, Cys-461, Glu-495, and Lys-497. Residue Cys-408 is modified to Cysteine persulfide.

Belongs to the HCP family. [2Fe-2S] cluster is required as a cofactor. Requires hybrid [4Fe-2O-2S] cluster as cofactor.

The protein localises to the cytoplasm. It carries out the reaction A + NH4(+) + H2O = hydroxylamine + AH2 + H(+). Its function is as follows. Catalyzes the reduction of hydroxylamine to form NH(3) and H(2)O. The polypeptide is Hydroxylamine reductase (Vibrio vulnificus (strain YJ016)).